The following is a 657-amino-acid chain: Heat shock protein hsp-6 (657 aa).

The N-terminal 27 residues, 1-27 (MLSARSFLSSARTIARSSLMSARSLSD), are a transit peptide targeting the mitochondrion. The interval 637 to 657 (KNSGGDAQEAKTAEEPKKEQN) is disordered. The segment covering 644–657 (QEAKTAEEPKKEQN) has biased composition (basic and acidic residues).

Belongs to the heat shock protein 70 family.

Its subcellular location is the mitochondrion. This chain is Heat shock protein hsp-6, found in Caenorhabditis elegans.